Consider the following 488-residue polypeptide: C2H2-type transcription factor MSN2 (488 aa).

2 C2H2-type zinc fingers span residues F376–H399 and F405–H427.

It localises to the nucleus. The protein resides in the cytoplasm. Functionally, transcription factor that acts as a key downstream transcription factor in the HOG1-MAPK pathway. Plays crucial roles in the regulation of conidiation, virulence and multi-stress responses. Acts as a negative regulator of proteases, lipases, as well as of the red-pigmented oosporein production, and contributes to virulence and growth in response to external pH. Contributes to the ability to infect Rhipicephalus microplus (Acari, Ixodidae) via the cuticle-penetration requiring route involving proteolytic activity at the host cuticle. Does not seem to be involved in subsequent growth and proliferation once the tick cuticle has been breached. This Beauveria bassiana (strain ARSEF 2860) (White muscardine disease fungus) protein is C2H2-type transcription factor MSN2.